A 178-amino-acid chain; its full sequence is Putative metal-dependent hydrolase GK0616 (178 aa).

Zn(2+) is bound by residues histidine 68, histidine 161, and histidine 165.

The protein belongs to the metal hydrolase YfiT family. In terms of assembly, homodimer. It depends on Zn(2+) as a cofactor.

It is found in the cytoplasm. Its function is as follows. Possible metal-dependent hydrolase. The sequence is that of Putative metal-dependent hydrolase GK0616 from Geobacillus kaustophilus (strain HTA426).